Consider the following 333-residue polypeptide: T-cell surface glycoprotein CD1b1 (333 aa).

The first 17 residues, 1-17 (MLLVALALLAFLFPAGD), serve as a signal peptide directing secretion. Topologically, residues 18-302 (TQNALQWPTS…LYWGHSISIG (285 aa)) are extracellular. N-linked (GlcNAc...) asparagine glycans are attached at residues N38, N75, and N146. Cystine bridges form between C120/C184, C149/C163, and C224/C279. The 99-residue stretch at 197-295 (PDIQKQVKPD…LEGQDIILYW (99 aa)) folds into the Ig-like domain. The chain crosses the membrane as a helical span at residues 303–323 (WIILAVLVPCLIVLVLFVLWF). The Cytoplasmic portion of the chain corresponds to 324–333 (YRRWSYEDIL). Residues 329–332 (YEDI) carry the Internalization signal motif.

As to quaternary structure, heterodimer with B2M (beta-2-microglobulin). Interacts with saposin C.

Its subcellular location is the cell membrane. It localises to the endosome membrane. The protein resides in the lysosome membrane. Functionally, antigen-presenting protein that binds self and non-self lipid and glycolipid antigens and presents them to T-cell receptors on natural killer T-cells. The polypeptide is T-cell surface glycoprotein CD1b1 (CD1B1) (Cavia porcellus (Guinea pig)).